Reading from the N-terminus, the 276-residue chain is Large ribosomal subunit protein uL2 (276 aa).

The tract at residues 222–276 (GVAMNPIDHPLGGGEGRSSGGRHPVSPWGMPTKGYKTRDRKKASSKLIIKRRGQK) is disordered. Basic residues predominate over residues 259–276 (RDRKKASSKLIIKRRGQK).

This sequence belongs to the universal ribosomal protein uL2 family. As to quaternary structure, part of the 50S ribosomal subunit. Forms a bridge to the 30S subunit in the 70S ribosome.

Functionally, one of the primary rRNA binding proteins. Required for association of the 30S and 50S subunits to form the 70S ribosome, for tRNA binding and peptide bond formation. It has been suggested to have peptidyltransferase activity; this is somewhat controversial. Makes several contacts with the 16S rRNA in the 70S ribosome. The protein is Large ribosomal subunit protein uL2 of Nitratidesulfovibrio vulgaris (strain ATCC 29579 / DSM 644 / CCUG 34227 / NCIMB 8303 / VKM B-1760 / Hildenborough) (Desulfovibrio vulgaris).